The following is a 495-amino-acid chain: Internal alternative NAD(P)H-ubiquinone oxidoreductase A1, mitochondrial (495 aa).

The N-terminal 41 residues, 1–41 (MPWFKNLIKISKTITNQSSSYKSITPLASPLLAQFLQFTKQ), are a transit peptide targeting the mitochondrion. Residue 61–91 (RIVVLGSGWAGCRLMKDIDTNIYDVVCVSPR) coordinates FAD. Position 228–264 (228–264 (LHCVVVGGGPTGVEFSGELSDFILKDVHQRYAHVKDY)) interacts with NAD(+). The Microbody targeting signal motif lies at 486–495 (LVFGRDISRI).

The protein belongs to the NADH dehydrogenase family. FAD is required as a cofactor.

The protein resides in the mitochondrion inner membrane. The protein localises to the peroxisome. The enzyme catalyses a quinone + NADH + H(+) = a quinol + NAD(+). The catalysed reaction is a ubiquinone + NADH + H(+) = a ubiquinol + NAD(+). Alternative NADH-ubiquinone oxidoreductase which catalyzes the oxidation of mitochondrial NADH does not translocate protons across the inner mitochondrial membrane. In Solanum tuberosum (Potato), this protein is Internal alternative NAD(P)H-ubiquinone oxidoreductase A1, mitochondrial (NDA1).